Here is a 267-residue protein sequence, read N- to C-terminus: Putative methylsterol monooxygenase DDB_G0270946 (267 aa).

The next 3 helical transmembrane spans lie at 31-51 (FIAHQVFYFGCFIPFLIADFI), 72-92 (YCAIKVILTQVLIQLPMMYIF), and 110-130 (IPYLLLTLVSSFIIEDFYFYW). In terms of domain architecture, Fatty acid hydroxylase spans 119-249 (SSFIIEDFYF…FTYLDKIFGT (131 aa)). The short motif at 132-136 (HRALH) is the Histidine box-1 element. Positions 145 to 149 (HKVHH) match the Histidine box-2 motif. A Histidine box-3 motif is present at residues 224–230 (FHDYHHE).

The protein belongs to the sterol desaturase family. The cofactor is Fe cation.

Its subcellular location is the endoplasmic reticulum membrane. The catalysed reaction is 4,4-dimethyl-5alpha-cholest-7-en-3beta-ol + 6 Fe(II)-[cytochrome b5] + 3 O2 + 5 H(+) = 4alpha-carboxy-4beta-methyl-5alpha-cholest-7-ene-3beta-ol + 6 Fe(III)-[cytochrome b5] + 4 H2O. It participates in steroid biosynthesis; zymosterol biosynthesis; zymosterol from lanosterol: step 3/6. The sequence is that of Putative methylsterol monooxygenase DDB_G0270946 from Dictyostelium discoideum (Social amoeba).